Here is a 359-residue protein sequence, read N- to C-terminus: Peptide chain release factor 1 (359 aa).

Glutamine 236 is subject to N5-methylglutamine. Positions 286 to 305 (KKEMERSTMRKSQIGSGDRS) are disordered.

Belongs to the prokaryotic/mitochondrial release factor family. Methylated by PrmC. Methylation increases the termination efficiency of RF1.

The protein localises to the cytoplasm. Functionally, peptide chain release factor 1 directs the termination of translation in response to the peptide chain termination codons UAG and UAA. This chain is Peptide chain release factor 1, found in Wolbachia pipientis wMel.